We begin with the raw amino-acid sequence, 376 residues long: Alcohol dehydrogenase 6 (376 aa).

Positions 47, 69, 99, 102, 105, 113, and 175 each coordinate Zn(2+). Residues 200-205 (GLGGVG), Asp-224, Arg-229, 293-295 (VGA), and Arg-371 contribute to the NAD(+) site.

It belongs to the zinc-containing alcohol dehydrogenase family. Class-V subfamily. Dimer. Zn(2+) is required as a cofactor.

It is found in the cytoplasm. It catalyses the reaction a primary alcohol + NAD(+) = an aldehyde + NADH + H(+). The catalysed reaction is a secondary alcohol + NAD(+) = a ketone + NADH + H(+). Functionally, alcohol dehydrogenase. Catalyzes the NAD-dependent oxidation of primary alcohols to the corresponding aldehydes. Oxidizes secondary alcohols to the corresponding ketones. This is Alcohol dehydrogenase 6 (Adh6) from Rattus norvegicus (Rat).